Here is a 120-residue protein sequence, read N- to C-terminus: T-cell receptor beta chain V region PHDS203 (120 aa).

The N-terminal stretch at 1-11 (VVLCFLGTGLV) is a signal peptide. Positions 12–106 (DMKVTQMSRY…TSVYFCAQGA (95 aa)) are v segment. C34 and C102 are oxidised to a cystine. Residues 107–120 (PEQYFGPGTRLTVL) are j segment.

This chain is T-cell receptor beta chain V region PHDS203, found in Mus musculus (Mouse).